Consider the following 451-residue polypeptide: Chromosomal replication initiator protein DnaA (451 aa).

A domain I, interacts with DnaA modulators region spans residues 1-71 (MSEKEIWDKV…QAIIYDVIGY (71 aa)). The domain II stretch occupies residues 71-112 (YEVKPHFISEDELASYNNVNTQEVQEPQVQHSSIDDKTWGKE). The interval 113–329 (QFNMHNTFDT…GALTRLLAYS (217 aa)) is domain III, AAA+ region. ATP is bound by residues G157, G159, K160, and T161. The tract at residues 330-451 (KLQGKPITTE…ENLEKEIRNQ (122 aa)) is domain IV, binds dsDNA.

Belongs to the DnaA family. As to quaternary structure, oligomerizes as a right-handed, spiral filament on DNA at oriC.

It localises to the cytoplasm. Functionally, plays an essential role in the initiation and regulation of chromosomal replication. ATP-DnaA binds to the origin of replication (oriC) to initiate formation of the DNA replication initiation complex once per cell cycle. Binds the DnaA box (a 9 base pair repeat at the origin) and separates the double-stranded (ds)DNA. Forms a right-handed helical filament on oriC DNA; dsDNA binds to the exterior of the filament while single-stranded (ss)DNA is stabiized in the filament's interior. The ATP-DnaA-oriC complex binds and stabilizes one strand of the AT-rich DNA unwinding element (DUE), permitting loading of DNA polymerase. After initiation quickly degrades to an ADP-DnaA complex that is not apt for DNA replication. Binds acidic phospholipids. This is Chromosomal replication initiator protein DnaA from Staphylococcus epidermidis (strain ATCC 35984 / DSM 28319 / BCRC 17069 / CCUG 31568 / BM 3577 / RP62A).